A 191-amino-acid chain; its full sequence is Pyridoxal 5'-phosphate synthase subunit PdxT (191 aa).

52–54 serves as a coordination point for L-glutamine; that stretch reads GES. The active-site Nucleophile is Cys-81. L-glutamine is bound by residues Arg-108 and 136 to 137; that span reads IR. Active-site charge relay system residues include His-172 and Glu-174.

The protein belongs to the glutaminase PdxT/SNO family. In terms of assembly, in the presence of PdxS, forms a dodecamer of heterodimers. Only shows activity in the heterodimer.

The enzyme catalyses aldehydo-D-ribose 5-phosphate + D-glyceraldehyde 3-phosphate + L-glutamine = pyridoxal 5'-phosphate + L-glutamate + phosphate + 3 H2O + H(+). The catalysed reaction is L-glutamine + H2O = L-glutamate + NH4(+). The protein operates within cofactor biosynthesis; pyridoxal 5'-phosphate biosynthesis. In terms of biological role, catalyzes the hydrolysis of glutamine to glutamate and ammonia as part of the biosynthesis of pyridoxal 5'-phosphate. The resulting ammonia molecule is channeled to the active site of PdxS. The protein is Pyridoxal 5'-phosphate synthase subunit PdxT of Actinobacillus pleuropneumoniae serotype 5b (strain L20).